Here is a 463-residue protein sequence, read N- to C-terminus: Soluble pyridine nucleotide transhydrogenase (463 aa).

35 to 44 (EDKPTVGGNC) serves as a coordination point for FAD.

It belongs to the class-I pyridine nucleotide-disulfide oxidoreductase family. FAD is required as a cofactor.

The protein resides in the cytoplasm. It carries out the reaction NAD(+) + NADPH = NADH + NADP(+). In terms of biological role, conversion of NADPH, generated by peripheral catabolic pathways, to NADH, which can enter the respiratory chain for energy generation. The protein is Soluble pyridine nucleotide transhydrogenase of Marinobacter nauticus (strain ATCC 700491 / DSM 11845 / VT8) (Marinobacter aquaeolei).